A 111-amino-acid chain; its full sequence is MAAKIKSGDLVKVIRGKDRGKEGTVKQVLSNDRLIVEGVQIVKKHVRATQQGQQAGIVSTEAPIHRSNVMVIDPETKQPTRVGITVKEEARDGKVKTVRVRVAKKSGKELA.

The protein belongs to the universal ribosomal protein uL24 family. In terms of assembly, part of the 50S ribosomal subunit.

Its function is as follows. One of two assembly initiator proteins, it binds directly to the 5'-end of the 23S rRNA, where it nucleates assembly of the 50S subunit. Functionally, one of the proteins that surrounds the polypeptide exit tunnel on the outside of the subunit. The protein is Large ribosomal subunit protein uL24 of Bifidobacterium longum (strain DJO10A).